Consider the following 742-residue polypeptide: Photosystem I P700 chlorophyll a apoprotein A2 (742 aa).

8 helical membrane-spanning segments follow: residues leucine 46–alanine 69, leucine 135–glutamine 158, leucine 175–isoleucine 199, isoleucine 273–tyrosine 291, leucine 336–glycine 359, serine 375–valine 401, alanine 423–histidine 445, and phenylalanine 525–isoleucine 543. 2 residues coordinate [4Fe-4S] cluster: cysteine 567 and cysteine 576. A run of 2 helical transmembrane segments spans residues alanine 583–tryptophan 604 and leucine 651–isoleucine 673. Histidine 662, methionine 670, and tyrosine 678 together coordinate divinyl chlorophyll a. Tryptophan 679 contributes to the phylloquinone binding site. The helical transmembrane segment at leucine 715 to alanine 735 threads the bilayer.

The protein belongs to the PsaA/PsaB family. As to quaternary structure, the PsaA/B heterodimer binds the P700 divinyl chlorophyll special pair and subsequent electron acceptors. PSI consists of a core antenna complex that captures photons, and an electron transfer chain that converts photonic excitation into a charge separation. The cyanobacterial PSI reaction center is composed of one copy each of PsaA,B,C,D,E,F,I,J,K,L,M and X, and forms trimeric complexes. Requires PSI electron transfer chain: 5 divinyl chlorophyll a, 1 divinyl chlorophyll a', 2 phylloquinones and 3 4Fe-4S clusters. PSI core antenna: 90 divinyl chlorophyll a, 22 carotenoids, 3 phospholipids and 1 galactolipid. P700 is a divinyl chlorophyll a/divinyl chlorophyll a' dimer, A0 is one or more divinyl chlorophyll a, A1 is one or both phylloquinones and FX is a shared 4Fe-4S iron-sulfur center. as cofactor.

The protein localises to the cellular thylakoid membrane. The catalysed reaction is reduced [plastocyanin] + hnu + oxidized [2Fe-2S]-[ferredoxin] = oxidized [plastocyanin] + reduced [2Fe-2S]-[ferredoxin]. Its function is as follows. PsaA and PsaB bind P700, the primary electron donor of photosystem I (PSI), as well as the electron acceptors A0, A1 and FX. PSI is a plastocyanin/cytochrome c6-ferredoxin oxidoreductase, converting photonic excitation into a charge separation, which transfers an electron from the donor P700 chlorophyll pair to the spectroscopically characterized acceptors A0, A1, FX, FA and FB in turn. Oxidized P700 is reduced on the lumenal side of the thylakoid membrane by plastocyanin or cytochrome c6. The chain is Photosystem I P700 chlorophyll a apoprotein A2 from Prochlorococcus marinus (strain MIT 9515).